Consider the following 314-residue polypeptide: Putative SET domain-containing protein L222 (314 aa).

The region spanning E23 to G172 is the SET domain.

The protein belongs to the class V-like SAM-binding methyltransferase superfamily.

This chain is Putative SET domain-containing protein L222, found in Acanthamoeba polyphaga mimivirus (APMV).